Consider the following 603-residue polypeptide: Complement factor I (603 aa).

A signal peptide spans 1–18 (MKLAHLSLFLLALHLSSS). Disulfide bonds link Cys36–Cys260, Cys46–Cys57, Cys51–Cys62, Cys64–Cys96, Cys70–Cys89, Cys78–Cys109, Cys144–Cys186, Cys157–Cys219, Cys191–Cys201, Cys234–Cys252, Cys246–Cys261, Cys264–Cys276, Cys271–Cys289, Cys283–Cys298, Cys348–Cys473, Cys386–Cys402, Cys394–Cys464, Cys487–Cys551, Cys515–Cys530, and Cys541–Cys570. Positions 58 to 111 (IEGTCICKLPYQCPRAGTPVCAMNGRSYPTYCHQKSFECLHPEIKFSHNGTCAA) constitute a Kazal-like domain. Residues Asn106, Asn116, Asn174, and Asn182 are each glycosylated (N-linked (GlcNAc...) asparagine). Residues 117-217 (VSLIYGRTKT…TELSNGLAGV (101 aa)) enclose the SRCR domain. 2 consecutive LDL-receptor class A domains span residues 218–262 (VCYK…LCCK) and 263–299 (GCRG…SRCE). The Ca(2+) site is built by Lys244, Asn247, Val249, Asp251, Asp257, and Glu258. Asn267 carries N-linked (GlcNAc...) asparagine glycosylation. Residues Tyr281, Asn284, Glu286, Asp288, Asp294, and Glu295 each coordinate Ca(2+). Residues 361–594 (VIGGKPANVG…YFDWISYHVG (234 aa)) enclose the Peptidase S1 domain. Catalysis depends on charge relay system residues His401 and Asp449. An N-linked (GlcNAc...) asparagine glycan is attached at Asn514. The active-site Charge relay system is the Ser545. The N-linked (GlcNAc...) asparagine glycan is linked to Asn556.

The protein belongs to the peptidase S1 family. In terms of assembly, heterodimer of a light and heavy chains; disulfide-linked. The fully processed and mature protein circulates as a zymogen, and is allosterically activated by substrate-induced remodeling of the active site. Interacts with C3b. Interacts with complement factor H. Expressed in the liver by hepatocytes. Also present in other cells such as monocytes, fibroblasts or keratinocytes.

It localises to the secreted. The protein resides in the extracellular space. The catalysed reaction is Inactivates complement subcomponents C3b, iC3b and C4b by proteolytic cleavage.. Its function is as follows. Trypsin-like serine protease that plays an essential role in regulating the immune response by controlling all complement pathways. Inhibits these pathways by cleaving three peptide bonds in the alpha-chain of C3b and two bonds in the alpha-chain of C4b thereby inactivating these proteins. Essential cofactors for these reactions include factor H and C4BP in the fluid phase and membrane cofactor protein/CD46 and CR1 on cell surfaces. The presence of these cofactors on healthy cells allows degradation of deposited C3b by CFI in order to prevent undesired complement activation, while in apoptotic cells or microbes, the absence of such cofactors leads to C3b-mediated complement activation and subsequent opsonization. This Mus musculus (Mouse) protein is Complement factor I (Cfi).